The sequence spans 522 residues: Tubulin-specific chaperone E (522 aa).

The 45-residue stretch at Gly27–Arg71 folds into the CAP-Gly domain. LRR repeat units lie at residues Asn149–Ser170, Asn175–Ala196, Asn201–Ser222, Ala226–Gln248, Asn249–Ala270, Arg274–Phe295, and Ser303–His324. In terms of domain architecture, LRRCT spans Asn337–Asp379.

Belongs to the TBCE family. Supercomplex made of cofactors A to E. Cofactors A and D function by capturing and stabilizing tubulin in a quasi-native conformation. Cofactor E binds to the cofactor D-tubulin complex; interaction with cofactor C then causes the release of tubulin polypeptides that are committed to the native state.

It is found in the cytoplasm. The protein resides in the cytoskeleton. Tubulin-folding protein; involved in the second step of the tubulin folding pathway. This Xenopus laevis (African clawed frog) protein is Tubulin-specific chaperone E (tbce).